The primary structure comprises 94 residues: Co-chaperonin GroES (94 aa).

Belongs to the GroES chaperonin family. As to quaternary structure, heptamer of 7 subunits arranged in a ring. Interacts with the chaperonin GroEL.

Its subcellular location is the cytoplasm. Functionally, together with the chaperonin GroEL, plays an essential role in assisting protein folding. The GroEL-GroES system forms a nano-cage that allows encapsulation of the non-native substrate proteins and provides a physical environment optimized to promote and accelerate protein folding. GroES binds to the apical surface of the GroEL ring, thereby capping the opening of the GroEL channel. This is Co-chaperonin GroES from Tetragenococcus halophilus (Pediococcus halophilus).